A 106-amino-acid chain; its full sequence is Adipokinetic hormone/corazonin-related peptide (106 aa).

Positions 1–25 (MRNSIYKLIMFAVLCMVLTSSLSYA) are cleaved as a signal peptide. Position 26 is a pyrrolidone carboxylic acid (glutamine 26). Residue alanine 35 is modified to Alanine amide. Residues 39 to 106 (SLAEAAQSTG…GLPLFSNGHL (68 aa)) constitute a propeptide that is removed on maturation.

The protein belongs to the AKH/HRTH/RPCH family. As to expression, only expressed in the head and thorax body segments of adults. Is more expressed in adult males than in females.

It localises to the secreted. Its function is as follows. Neuropeptide with neuromodulator or neurotransmitter role that activates the adipokinetic hormone/corazonin-related peptide receptor (ACPR). May function in regulation of post-ecdysis activities. Does not activate the A.gambiae adipokinetic hormone (AKH) and corazonin (CRZ) receptors. In Aedes aegypti (Yellowfever mosquito), this protein is Adipokinetic hormone/corazonin-related peptide.